The chain runs to 620 residues: Chaperone protein HscA homolog (620 aa).

Belongs to the heat shock protein 70 family.

Chaperone involved in the maturation of iron-sulfur cluster-containing proteins. Has a low intrinsic ATPase activity which is markedly stimulated by HscB. The polypeptide is Chaperone protein HscA homolog (Shewanella putrefaciens (strain CN-32 / ATCC BAA-453)).